Here is a 529-residue protein sequence, read N- to C-terminus: Phosphoenolpyruvate carboxykinase (ATP) (529 aa).

Residue R52 coordinates substrate. Ca(2+) contacts are provided by R130, N131, and F133. 2 residues coordinate substrate: Y191 and K197. ATP is bound by residues K197, H216, and 232–240 (GLSGTGKTT). K197 and H216 together coordinate Mn(2+). Residue D253 coordinates Mn(2+). G267 contributes to the Ca(2+) binding site. ATP contacts are provided by residues E281, R319, 438 to 439 (RF), F439, and T444. Position 319 (R319) interacts with substrate.

It belongs to the phosphoenolpyruvate carboxykinase (ATP) family. Dimer of dimers. It depends on Mn(2+) as a cofactor.

Its subcellular location is the cytoplasm. It catalyses the reaction oxaloacetate + ATP = phosphoenolpyruvate + ADP + CO2. It functions in the pathway carbohydrate biosynthesis; gluconeogenesis. With respect to regulation, allosterically activated by calcium. Its function is as follows. Involved in gluconeogenesis. Catalyzes the conversion of oxaloacetate (OAA) to phosphoenolpyruvate (PEP) through direct phosphoryl transfer between the nucleoside triphosphate and OAA. This is Phosphoenolpyruvate carboxykinase (ATP) from Thermus thermophilus (strain ATCC 27634 / DSM 579 / HB8).